The chain runs to 521 residues: Probable cytochrome P450 12d1 distal, mitochondrial (521 aa).

Residues 1-19 (MNTLSSARSVAIYVGPVRS) constitute a mitochondrion transit peptide. Residue Cys467 coordinates heme.

Belongs to the cytochrome P450 family. The cofactor is heme.

The protein localises to the mitochondrion membrane. This chain is Probable cytochrome P450 12d1 distal, mitochondrial, found in Drosophila melanogaster (Fruit fly).